Reading from the N-terminus, the 96-residue chain is Acetolactate synthase isozyme 1 small subunit (96 aa).

The region spanning 10-83 is the ACT domain; the sequence is ILELTVRNHP…DVVKVQRNQS (74 aa).

Belongs to the acetolactate synthase small subunit family. As to quaternary structure, dimer of large and small chains.

The catalysed reaction is 2 pyruvate + H(+) = (2S)-2-acetolactate + CO2. The protein operates within amino-acid biosynthesis; L-isoleucine biosynthesis; L-isoleucine from 2-oxobutanoate: step 1/4. Its pathway is amino-acid biosynthesis; L-valine biosynthesis; L-valine from pyruvate: step 1/4. This is Acetolactate synthase isozyme 1 small subunit (ilvN) from Escherichia coli O157:H7.